A 211-amino-acid chain; its full sequence is uncharacterized protein (211 aa).

This is an uncharacterized protein from Mycoplasma pneumoniae (strain ATCC 29342 / M129 / Subtype 1) (Mycoplasmoides pneumoniae).